The sequence spans 567 residues: Amino-acid acetyltransferase, mitochondrial (567 aa).

The 167-residue stretch at 392–558 (KDSPQTNPLH…ARLKEYAKHI (167 aa)) folds into the N-acetyltransferase domain.

The protein belongs to the acetyltransferase family.

The protein resides in the mitochondrion. It carries out the reaction L-glutamate + acetyl-CoA = N-acetyl-L-glutamate + CoA + H(+). The protein operates within amino-acid biosynthesis; L-arginine biosynthesis; N(2)-acetyl-L-ornithine from L-glutamate: step 1/4. N-acetylglutamate synthase involved in arginine biosynthesis. The protein is Amino-acid acetyltransferase, mitochondrial (ARG2) of Vanderwaltozyma polyspora (strain ATCC 22028 / DSM 70294 / BCRC 21397 / CBS 2163 / NBRC 10782 / NRRL Y-8283 / UCD 57-17) (Kluyveromyces polysporus).